Reading from the N-terminus, the 167-residue chain is Sporulation membrane protein YtrI (167 aa).

The chain crosses the membrane as a helical span at residues 15-35 (FFAGMMCGAVISWFFFLFTYG).

The protein localises to the cell membrane. In terms of biological role, involved in sporulation. The protein is Sporulation membrane protein YtrI (ytrI) of Bacillus subtilis (strain 168).